Here is a 179-residue protein sequence, read N- to C-terminus: MLDLGLSKMALIGVVALVVLGPERLPRVARTAGALFGRAQRYINDVKAEVSREIELDALRTMKTDFESAARNVETTIHDNLREHEKELNDTWHSAVGGLDGAAGDAGSVGSPGSDTPAAPSWRGSSAALAPKRRNWRIKQAATPVWYKRATTRRTHVQSGAARVARHQPASLRRPTRFF.

Residues 1–21 (MLDLGLSKMALIGVVALVVLG) form a helical membrane-spanning segment. The segment covering 101–115 (GAAGDAGSVGSPGSD) has biased composition (low complexity). Positions 101 to 134 (GAAGDAGSVGSPGSDTPAAPSWRGSSAALAPKRR) are disordered.

The protein belongs to the TatB family. The Tat system comprises two distinct complexes: a TatABC complex, containing multiple copies of TatA, TatB and TatC subunits, and a separate TatA complex, containing only TatA subunits. Substrates initially bind to the TatABC complex, which probably triggers association of the separate TatA complex to form the active translocon.

It localises to the cell inner membrane. Its function is as follows. Part of the twin-arginine translocation (Tat) system that transports large folded proteins containing a characteristic twin-arginine motif in their signal peptide across membranes. Together with TatC, TatB is part of a receptor directly interacting with Tat signal peptides. TatB may form an oligomeric binding site that transiently accommodates folded Tat precursor proteins before their translocation. The chain is Sec-independent protein translocase protein TatB from Burkholderia orbicola (strain AU 1054).